A 233-amino-acid chain; its full sequence is Uridylate kinase (233 aa).

Position 7 to 10 (7 to 10 (KISG)) interacts with ATP. Gly-49 serves as a coordination point for UMP. Residues Gly-50 and Arg-54 each coordinate ATP. UMP is bound by residues Asp-68 and 129 to 136 (TGNPFFTT). The ATP site is built by Thr-156, Tyr-162, and Asp-165.

It belongs to the UMP kinase family. As to quaternary structure, homohexamer.

The protein resides in the cytoplasm. The catalysed reaction is UMP + ATP = UDP + ADP. Its pathway is pyrimidine metabolism; CTP biosynthesis via de novo pathway; UDP from UMP (UMPK route): step 1/1. Its activity is regulated as follows. Inhibited by UTP. Functionally, catalyzes the reversible phosphorylation of UMP to UDP. The protein is Uridylate kinase of Neorickettsia sennetsu (strain ATCC VR-367 / Miyayama) (Ehrlichia sennetsu).